We begin with the raw amino-acid sequence, 1711 residues long: Serine/threonine-protein kinase MRCK beta (1711 aa).

Residues 76–342 (FEIIKVIGRG…IEDFKKHAFF (267 aa)) enclose the Protein kinase domain. ATP contacts are provided by residues 82 to 90 (IGRGAFGEV) and lysine 105. The active-site Proton acceptor is the aspartate 200. Phosphoserine; by autocatalysis occurs at positions 221 and 233. The residue at position 239 (threonine 239) is a Phosphothreonine; by autocatalysis. Positions 343–413 (EGLNWENIRN…TTESCFSDRG (71 aa)) constitute an AGC-kinase C-terminal domain. A Phosphothreonine modification is found at threonine 423. Coiled-coil stretches lie at residues 431-815 (QRDL…AHWE) and 878-939 (ELQS…FRAD). Residues 461-484 (LQESTQTVQSLHGSSRALSNSNRD) are disordered. Over residues 463 to 481 (ESTQTVQSLHGSSRALSNS) the composition is skewed to polar residues. Residue arginine 671 is modified to Omega-N-methylarginine. Phosphotyrosine is present on tyrosine 954. Positions 969–1009 (SSASEQETQAPKPEASPSMSVAASEQQEDMARPPQRPSAVP) are disordered. Residues 1025–1075 (AHQFSIKSFSSPTQCSHCTSLMVGLIRQGYACEVCSFACHVSCKDGAPQVC) form a Phorbol-ester/DAG-type zinc finger. The PH domain occupies 1095-1214 (GTAYKGHVKV…WVGILEGLQS (120 aa)). The CNH domain maps to 1240–1513 (IKAILTAAIV…RPLNSEGTLN (274 aa)). The 14-residue stretch at 1583-1596 (ISNPTNFNHVAHMG) folds into the CRIB domain. Residues 1611-1711 (AVPPSQEERP…EGLEQPACDT (101 aa)) are disordered. Residues 1641 to 1650 (WPSSGGSEPS) show a composition bias toward polar residues. Residues 1664 to 1675 (DFDKEPDSDSTK) are compositionally biased toward basic and acidic residues. 5 positions are modified to phosphoserine: serine 1680, serine 1682, serine 1686, serine 1690, and serine 1693.

The protein belongs to the protein kinase superfamily. AGC Ser/Thr protein kinase family. DMPK subfamily. As to quaternary structure, homodimer and homotetramer via the coiled coil regions. Interacts tightly with GTP-bound but not GDP-bound CDC42. Interacts with TJP1, when in the presence of catalytically active CDC42. Forms a tripartite complex with MYO18A and LURAP1 with the latter acting as an adapter connecting CDC42BPB and MYO18A. LURAP1 binding results in activation of CDC42BPB by abolition of its negative autoregulation. Interacts with STRIP1, STRN3 and SIKE1. Interacts with CPNE4 (via VWFA domain). Interacts with LURAP1. Interacts (via AGC-kinase C-terminal domain) with FAM89B/LRAP25 (via LRR repeat). Forms a tripartite complex with FAM89B/LRAP25 and LIMK1. The cofactor is Mg(2+). Proteolytically cleaved by caspases upon apoptosis induction. As to expression, expressed in all tissues examined, with high levels in heart, brain, placenta and lung.

Its subcellular location is the cytoplasm. The protein localises to the cell membrane. It is found in the cell junction. It localises to the cell projection. The protein resides in the lamellipodium. The catalysed reaction is L-seryl-[protein] + ATP = O-phospho-L-seryl-[protein] + ADP + H(+). It carries out the reaction L-threonyl-[protein] + ATP = O-phospho-L-threonyl-[protein] + ADP + H(+). With respect to regulation, maintained in an inactive, closed conformation by an interaction between the kinase domain and the negative autoregulatory C-terminal coiled-coil region. Agonist binding to the phorbol ester binding site disrupts this, releasing the kinase domain to allow N-terminus-mediated dimerization and kinase activation by transautophosphorylation. Inhibited by chelerythrine chloride. In terms of biological role, serine/threonine-protein kinase which is an important downstream effector of CDC42 and plays a role in the regulation of cytoskeleton reorganization and cell migration. Regulates actin cytoskeletal reorganization via phosphorylation of PPP1R12C and MYL9/MLC2. In concert with MYO18A and LURAP1, is involved in modulating lamellar actomyosin retrograde flow that is crucial to cell protrusion and migration. Phosphorylates PPP1R12A. In concert with FAM89B/LRAP25 mediates the targeting of LIMK1 to the lamellipodium resulting in its activation and subsequent phosphorylation of CFL1 which is important for lamellipodial F-actin regulation. This Homo sapiens (Human) protein is Serine/threonine-protein kinase MRCK beta.